We begin with the raw amino-acid sequence, 713 residues long: Bifunctional protein gal10 (713 aa).

Positions 1–350 are galactowaldenase; sequence MAVQDEYILV…TIENPFGFQI (350 aa). 7–38 contacts NAD(+); sequence YILVTGGAGYIGSHTVIELINHGYKVIIVDNL. The segment at 351–713 is mutarotase; sequence DNYKWKLFNT…SASYNSGEYY (363 aa). His-532 serves as the catalytic For mutarotase activity.

The protein in the N-terminal section; belongs to the NAD(P)-dependent epimerase/dehydratase family. It in the C-terminal section; belongs to the aldose epimerase family. The cofactor is NAD(+).

The enzyme catalyses UDP-alpha-D-glucose = UDP-alpha-D-galactose. The catalysed reaction is alpha-D-glucose = beta-D-glucose. It functions in the pathway carbohydrate metabolism; galactose metabolism. It participates in carbohydrate metabolism; hexose metabolism. Its function is as follows. Mutarotase converts alpha-aldose to the beta-anomer. It is active on D-glucose, L-arabinose, D-xylose, D-galactose, maltose and lactose. In Schizosaccharomyces pombe (strain 972 / ATCC 24843) (Fission yeast), this protein is Bifunctional protein gal10 (gal10).